The chain runs to 578 residues: Acyl-coenzyme A synthetase ACSM5, mitochondrial (578 aa).

The N-terminal 22 residues, 1-22 (MRLWLRGLVYQARRSSWGVFRI), are a transit peptide targeting the mitochondrion. Lys-96 is modified (N6-acetyllysine; alternate). Lys-96 is modified (N6-succinyllysine; alternate). Residue Lys-151 is modified to N6-acetyllysine. Residue 229–237 (TSGTTGTPK) participates in ATP binding. Position 335 is an N6-acetyllysine (Lys-335). Residues 367–372 (EGYGQS), Asp-454, Arg-469, and Lys-565 each bind ATP.

The protein belongs to the ATP-dependent AMP-binding enzyme family. The cofactor is Mg(2+). Requires Mn(2+) as cofactor.

The protein localises to the mitochondrion matrix. The catalysed reaction is a medium-chain fatty acid + ATP + CoA = a medium-chain fatty acyl-CoA + AMP + diphosphate. Its function is as follows. Catalyzes the activation of fatty acids by CoA to produce an acyl-CoA, the first step in fatty acid metabolism. The chain is Acyl-coenzyme A synthetase ACSM5, mitochondrial (Acsm5) from Rattus norvegicus (Rat).